Consider the following 254-residue polypeptide: MDEHSIMQAVAVARGARNIEVFTGAGMSADSGLETYRDPETGVWSKVDPQAMASIDAWARDPEPMWAWYRWRAGQAMKARPNAGHETIAYWEGSHLVDAVHVTTQNIDNLHERAGSTEVTHLHGSLFEFRCSICSKPWRDDGDYPREPVERLAPPTCSLCGNPVRPGVVWFGEALPQEEWAVAERRMREADLVVIVGTSGIVYPAASLPVLAHQRGVPILEITPKETDLSRIATYSWRATAAEGLPALVRRLGV.

The Deacetylase sirtuin-type domain occupies 1–254 (MDEHSIMQAV…LPALVRRLGV (254 aa)). Residue 24-44 (GAGMSADSGLETYRDPETGVW) participates in NAD(+) binding. Substrate-binding residues include Tyr-69 and Arg-72. NAD(+) is bound at residue 105 to 108 (QNID). Catalysis depends on His-123, which acts as the Proton acceptor. Residues Cys-131, Cys-134, Cys-157, and Cys-160 each contribute to the Zn(2+) site. NAD(+) contacts are provided by residues 197-199 (GTS) and Ala-241.

Belongs to the sirtuin family. Class III subfamily. Requires Zn(2+) as cofactor.

It is found in the cytoplasm. The catalysed reaction is N(6)-acetyl-L-lysyl-[protein] + NAD(+) + H2O = 2''-O-acetyl-ADP-D-ribose + nicotinamide + L-lysyl-[protein]. The enzyme catalyses N(6)-succinyl-L-lysyl-[protein] + NAD(+) + H2O = 2''-O-succinyl-ADP-D-ribose + nicotinamide + L-lysyl-[protein]. In terms of biological role, NAD-dependent lysine deacetylase and desuccinylase that specifically removes acetyl and succinyl groups on target proteins. Modulates the activities of several proteins which are inactive in their acylated form. The sequence is that of NAD-dependent protein deacylase 2 from Corynebacterium efficiens (strain DSM 44549 / YS-314 / AJ 12310 / JCM 11189 / NBRC 100395).